The following is a 185-amino-acid chain: Ribosome-recycling factor (185 aa).

The protein belongs to the RRF family.

It localises to the cytoplasm. Responsible for the release of ribosomes from messenger RNA at the termination of protein biosynthesis. May increase the efficiency of translation by recycling ribosomes from one round of translation to another. The chain is Ribosome-recycling factor from Nitrosospira multiformis (strain ATCC 25196 / NCIMB 11849 / C 71).